Consider the following 102-residue polypeptide: Ferredoxin-thioredoxin reductase, catalytic chain (102 aa).

Position 53 (Cys-53) interacts with [4Fe-4S] cluster. Catalysis depends on Cys-55, which acts as the Nucleophile. Cys-55 and Cys-85 are joined by a disulfide. [4Fe-4S] cluster contacts are provided by Cys-72, Cys-74, and Cys-83.

This sequence belongs to the ferredoxin thioredoxin reductase beta subunit family. In terms of assembly, heterodimer of subunit A (variable subunit) and subunit B (catalytic subunit). Heterodimeric FTR forms a complex with ferredoxin and thioredoxin. The cofactor is [4Fe-4S] cluster.

It is found in the plastid. Its subcellular location is the chloroplast. It catalyses the reaction [thioredoxin]-disulfide + 2 reduced [2Fe-2S]-[ferredoxin] + 2 H(+) = [thioredoxin]-dithiol + 2 oxidized [2Fe-2S]-[ferredoxin]. Functionally, catalytic subunit of the ferredoxin-thioredoxin reductase (FTR), which catalyzes the two-electron reduction of thioredoxins by the electrons provided by reduced ferredoxin. The polypeptide is Ferredoxin-thioredoxin reductase, catalytic chain (ftrB) (Guillardia theta (Cryptophyte)).